The primary structure comprises 115 residues: Putative TGFB1-induced anti-apoptotic factor 1 (115 aa).

Not detectable in normal kidney and liver. Up-regulated in chronic and acute allograft rejection: expressed in the inflammatory infiltrate and in tubular epithelial cells.

It localises to the nucleus. In terms of biological role, inhibits the cytotoxic effects of TNF-alpha and overexpressed TNF receptor adapters TRADD, FADD, and RIPK1. Involved in TGF-beta1 inhibition of IkappaB-alpha expression and suppression of TNF-mediated IkappaB-alpha degradation. In Homo sapiens (Human), this protein is Putative TGFB1-induced anti-apoptotic factor 1 (MYO18A).